The sequence spans 199 residues: Recombination protein RecR (199 aa).

The C4-type zinc-finger motif lies at cysteine 57–cysteine 72. The region spanning threonine 80–serine 176 is the Toprim domain.

It belongs to the RecR family.

Functionally, may play a role in DNA repair. It seems to be involved in an RecBC-independent recombinational process of DNA repair. It may act with RecF and RecO. The chain is Recombination protein RecR from Lactobacillus helveticus (strain DPC 4571).